A 262-amino-acid chain; its full sequence is MREAVIAEVSTQLSEVVGVIERHLEPTLLAVHLYGSAVDGGLKPHSDIDLLVTVTVRLDETTRRALINDLLETSASPGESEILRAVEVTIVVHDDIIPWRYPAKRELQFGEWQRNDILAGIFEPATIDIDLAILLTKAREHSVALVGPAAEELFDPVPEQDLFEALNETLTLWNSPPDWAGDERNVVLTLSRIWYSAVTGKIAPKDVAADWAMERLPAQYQPVILEARQAYLGQEDRLASRADQLEEFVHYVKGEITKVVGK.

It carries out the reaction streptomycin + ATP = 3''-O-adenylylstreptomycin + diphosphate. The enzyme catalyses spectinomycin + ATP = 9-O-adenylylspectinomycin + diphosphate. Mediates bacterial resistance to the antibiotics streptomycin and spectinomycin. This chain is Aminoglycoside (3'') (9) adenylyltransferase, found in Shigella flexneri.